Reading from the N-terminus, the 104-residue chain is Pyrimidine/purine nucleoside phosphorylase (104 aa).

It belongs to the nucleoside phosphorylase PpnP family.

It catalyses the reaction a purine D-ribonucleoside + phosphate = a purine nucleobase + alpha-D-ribose 1-phosphate. The enzyme catalyses adenosine + phosphate = alpha-D-ribose 1-phosphate + adenine. It carries out the reaction cytidine + phosphate = cytosine + alpha-D-ribose 1-phosphate. The catalysed reaction is guanosine + phosphate = alpha-D-ribose 1-phosphate + guanine. It catalyses the reaction inosine + phosphate = alpha-D-ribose 1-phosphate + hypoxanthine. The enzyme catalyses thymidine + phosphate = 2-deoxy-alpha-D-ribose 1-phosphate + thymine. It carries out the reaction uridine + phosphate = alpha-D-ribose 1-phosphate + uracil. The catalysed reaction is xanthosine + phosphate = alpha-D-ribose 1-phosphate + xanthine. Catalyzes the phosphorolysis of diverse nucleosides, yielding D-ribose 1-phosphate and the respective free bases. Can use uridine, adenosine, guanosine, cytidine, thymidine, inosine and xanthosine as substrates. Also catalyzes the reverse reactions. This is Pyrimidine/purine nucleoside phosphorylase from Geotalea uraniireducens (strain Rf4) (Geobacter uraniireducens).